The following is a 435-amino-acid chain: Ras association domain-containing protein 9 (435 aa).

The interval methionine 1–methionine 22 is disordered. The Ras-associating domain occupies glutamate 25–alanine 119. Positions histidine 195–valine 291 form a coiled coil. Positions serine 371–serine 423 are disordered. Basic and acidic residues predominate over residues cysteine 375 to glutamate 386. Over residues arginine 400–serine 423 the composition is skewed to polar residues.

Interacts with PAM. As to expression, testis, kidney, skeletal muscle, liver, lung, brain, heart, pituitary gland, adrenal gland and ovary.

The protein resides in the endosome. Functionally, may play a role in regulating vesicuar trafficking in cells. This is Ras association domain-containing protein 9 (Rassf9) from Rattus norvegicus (Rat).